The following is a 291-amino-acid chain: Glycine--tRNA ligase alpha subunit (291 aa).

Belongs to the class-II aminoacyl-tRNA synthetase family. Tetramer of two alpha and two beta subunits.

It is found in the cytoplasm. The enzyme catalyses tRNA(Gly) + glycine + ATP = glycyl-tRNA(Gly) + AMP + diphosphate. In Rhizorhabdus wittichii (strain DSM 6014 / CCUG 31198 / JCM 15750 / NBRC 105917 / EY 4224 / RW1) (Sphingomonas wittichii), this protein is Glycine--tRNA ligase alpha subunit.